The primary structure comprises 189 residues: Cell division protein SepF (189 aa).

Disordered regions lie at residues 1 to 75 (MEGQ…GLPG) and 155 to 174 (STPS…SPTP).

This sequence belongs to the SepF family. In terms of assembly, homodimer. Interacts with FtsZ.

Its subcellular location is the cytoplasm. Its function is as follows. Cell division protein that is part of the divisome complex and is recruited early to the Z-ring. Probably stimulates Z-ring formation, perhaps through the cross-linking of FtsZ protofilaments. Its function overlaps with FtsA. The protein is Cell division protein SepF of Synechococcus sp. (strain JA-3-3Ab) (Cyanobacteria bacterium Yellowstone A-Prime).